Consider the following 419-residue polypeptide: DNA ligase (419 aa).

The segment at 1 to 120 (MLNQFPGQYS…ARQKRGAHTN (120 aa)) is NTD. The interval 121-317 (RGMIPPMLVK…NYHSAHLAKL (197 aa)) is AD domain. Positions 149, 151, 203, and 232 each coordinate ATP. The active-site N6-AMP-lysine intermediate is the Lys151. Glu203 serves as a coordination point for a divalent metal cation. Residue Glu291 coordinates a divalent metal cation. Residues Ile294 and Lys316 each coordinate ATP. An OB domain region spans residues 318 to 419 (KPLLDAEFIL…REPINVLEII (102 aa)).

It belongs to the ATP-dependent DNA ligase family. It depends on a divalent metal cation as a cofactor.

It localises to the virion. The catalysed reaction is ATP + (deoxyribonucleotide)n-3'-hydroxyl + 5'-phospho-(deoxyribonucleotide)m = (deoxyribonucleotide)n+m + AMP + diphosphate.. In terms of biological role, very low-fidelity DNA ligase that seals nicks in double-stranded DNA during DNA repair. Together with the viral repair DNA polymerase X, fills the single nucleotide gaps generated by the AP endonuclease. It is not essential for viral replication and recombination. Displays a very low adenylation activity towards DNA with 3'-dideoxy- or 3'-amino-terminated nicks compared to regular nick DNA. The polypeptide is DNA ligase (LIG) (Ornithodoros (relapsing fever ticks)).